We begin with the raw amino-acid sequence, 117 residues long: Large ribosomal subunit protein bL19 (117 aa).

This sequence belongs to the bacterial ribosomal protein bL19 family.

Its function is as follows. This protein is located at the 30S-50S ribosomal subunit interface and may play a role in the structure and function of the aminoacyl-tRNA binding site. This Vibrio cholerae serotype O1 (strain ATCC 39541 / Classical Ogawa 395 / O395) protein is Large ribosomal subunit protein bL19.